Reading from the N-terminus, the 633-residue chain is Basic helix-loop-helix ARNT-like protein 1 (633 aa).

The tract at residues 1–65 (MADQRMDISS…GMDTDKDDQH (65 aa)) is disordered. Ser17 is subject to Phosphoserine; by GSK3-beta. The segment covering 24-33 (ISSSLSTSGM) has biased composition (polar residues). Positions 36-41 (NRKRKG) match the Nuclear localization signal motif. A bHLH domain is found at 79–132 (NAREAHSQIEKRRRDKMNSFIDELASLVPTCNAMSRKLDKLTVLRMAVQHMKTL). A Phosphoserine modification is found at Ser85. Ser97 is subject to Phosphoserine; by CK2. The short motif at 149-159 (LSDDELKHLIL) is the Nuclear export signal 1 element. Residues 150–222 (SDDELKHLIL…EQLSSSDTAP (73 aa)) form the PAS 1 domain. Lys259 is covalently cross-linked (Glycyl lysine isopeptide (Lys-Gly) (interchain with G-Cter in SUMO2 and SUMO3)). Lys266 participates in a covalent cross-link: Glycyl lysine isopeptide (Lys-Gly) (interchain with G-Cter in SUMO). Residues 333-403 (PQPVNGEIRV…ECHRQVLQTR (71 aa)) enclose the PAS 2 domain. Positions 368–376 (LAYLPQELL) match the Nuclear export signal 2 motif. The region spanning 408–451 (TNCYKFKIKDGSFITLRSRWFSFMNPWTKEVEYIVSTNTVVSTN) is the PAC domain. Disordered stretches follow at residues 472-499 (SVLQ…RAGA) and 518-555 (GSSP…TPDI). Residues 518 to 528 (GSSPSSCGSSP) are compositionally biased toward low complexity. Residue Lys545 is modified to N6-acetyllysine.

In terms of assembly, component of the circadian clock oscillator which includes the CRY1/2 proteins, CLOCK or NPAS2, BMAL1 or BMAL2, CSNK1D and/or CSNK1E, TIMELESS and the PER1/2/3 proteins. Forms a heterodimer with CLOCK. The CLOCK-BMAL1 heterodimer is required for E-box-dependent transactivation, for CLOCK nuclear translocation and degradation, and, for phosphorylation of both CLOCK and BMAL1. Interacts with PER1, PER2, CRY1 and CRY2 and this interaction requires a translocation to the nucleus. Interaction of the CLOCK-BMAL1 heterodimer with PER or CRY inhibits transcription activation. Ubiquitinated, leading to its proteasomal degradation. Deubiquitinated by USP9X. In terms of processing, O-glycosylated; contains O-GlcNAc. O-glycosylation by OGT prevents protein degradation by inhibiting ubiquitination. It also stabilizes the CLOCK-BMAL1 heterodimer thereby increasing CLOCK-BMAL1-mediated transcription of genes in the negative loop of the circadian clock such as PER1/2/3 and CRY1/2. Post-translationally, acetylated on Lys-545 by CLOCK during the repression phase of the circadian cycle. Acetylation facilitates recruitment of CRY1 protein and initiates the repression phase of the circadian cycle. Acetylated at Lys-545 by KAT5 during the activation phase of the cycle, leading to recruitment of the positive transcription elongation factor b (P-TEFb) and BRD4, followed by productive elongation of circadian transcripts. Deacetylated by SIRT1, which may result in decreased protein stability. Phosphorylated upon dimerization with CLOCK. Phosphorylation enhances the transcriptional activity, alters the subcellular localization and decreases the stability of the CLOCK-BMAL1 heterodimer by promoting its degradation. Phosphorylation shows circadian variations in the liver with a peak between CT10 to CT14. Phosphorylation at Ser-97 by CK2 is essential for its nuclear localization, its interaction with CLOCK and controls CLOCK nuclear entry. Dephosphorylation at Ser-85 is important for dimerization with CLOCK and transcriptional activity. In terms of processing, sumoylated on Lys-266 upon dimerization with CLOCK. Predominantly conjugated to poly-SUMO2/3 rather than SUMO1 and the level of these conjugates undergo rhythmic variation, peaking at CT9-CT12. Sumoylation localizes it exclusively to the PML body and promotes its ubiquitination in the PML body, ubiquitin-dependent proteasomal degradation and the transcriptional activity of the CLOCK-BMAL1 heterodimer. Post-translationally, undergoes lysosome-mediated degradation in a time-dependent manner in the liver.

The protein resides in the nucleus. The protein localises to the cytoplasm. Its subcellular location is the PML body. Functionally, transcriptional activator which forms a core component of the circadian clock. The circadian clock, an internal time-keeping system, regulates various physiological processes through the generation of approximately 24 hour circadian rhythms in gene expression, which are translated into rhythms in metabolism and behavior. It is derived from the Latin roots 'circa' (about) and 'diem' (day) and acts as an important regulator of a wide array of physiological functions including metabolism, sleep, body temperature, blood pressure, endocrine, immune, cardiovascular, and renal function. Consists of two major components: the central clock, residing in the suprachiasmatic nucleus (SCN) of the brain, and the peripheral clocks that are present in nearly every tissue and organ system. Both the central and peripheral clocks can be reset by environmental cues, also known as Zeitgebers (German for 'timegivers'). The predominant Zeitgeber for the central clock is light, which is sensed by retina and signals directly to the SCN. The central clock entrains the peripheral clocks through neuronal and hormonal signals, body temperature and feeding-related cues, aligning all clocks with the external light/dark cycle. Circadian rhythms allow an organism to achieve temporal homeostasis with its environment at the molecular level by regulating gene expression to create a peak of protein expression once every 24 hours to control when a particular physiological process is most active with respect to the solar day. Transcription and translation of core clock components (CLOCK, NPAS2, BMAL1, BMAL2, PER1, PER2, PER3, CRY1 and CRY2) plays a critical role in rhythm generation, whereas delays imposed by post-translational modifications (PTMs) are important for determining the period (tau) of the rhythms (tau refers to the period of a rhythm and is the length, in time, of one complete cycle). A diurnal rhythm is synchronized with the day/night cycle, while the ultradian and infradian rhythms have a period shorter and longer than 24 hours, respectively. Disruptions in the circadian rhythms contribute to the pathology of cardiovascular diseases, cancer, metabolic syndromes and aging. A transcription/translation feedback loop (TTFL) forms the core of the molecular circadian clock mechanism. Transcription factors, CLOCK or NPAS2 and BMAL1 or BMAL2, form the positive limb of the feedback loop, act in the form of a heterodimer and activate the transcription of core clock genes and clock-controlled genes (involved in key metabolic processes), harboring E-box elements (5'-CACGTG-3') within their promoters. The core clock genes: PER1/2/3 and CRY1/2 which are transcriptional repressors form the negative limb of the feedback loop and interact with the CLOCK|NPAS2-BMAL1|BMAL2 heterodimer inhibiting its activity and thereby negatively regulating their own expression. This heterodimer also activates nuclear receptors NR1D1/2 and RORA/B/G, which form a second feedback loop and which activate and repress BMAL1 transcription, respectively. The preferred binding motif for the CLOCK-BMAL1 heterodimer is 5'-CACGTGA-3', which contains a flanking adenine nucleotide at the 3-prime end of the canonical 6-nucleotide E-box sequence. CLOCK specifically binds to the half-site 5'-CAC-3', while BMAL1 binds to the half-site 5'-GTGA-3'. Essential for the rhythmic interaction of CLOCK with ASS1 and plays a critical role in positively regulating CLOCK-mediated acetylation of ASS1. Plays a role in protecting against lethal sepsis by limiting the expression of immune checkpoint protein CD274 in macrophages in a PKM2-dependent manner. This is Basic helix-loop-helix ARNT-like protein 1 (BMAL1) from Tyto alba (Barn owl).